We begin with the raw amino-acid sequence, 257 residues long: Auxin-responsive protein IAA17 (257 aa).

2 disordered regions span residues 1-51 (MSPP…PAAT) and 85-119 (GKKAAAGEEDEDAEEEDKKVAAAPQAPAAKAQVVG). An EAR-like (transcriptional repression) motif is present at residues 33 to 37 (LRLGL). Residues 105–118 (AAAPQAPAAKAQVV) show a composition bias toward low complexity. The 89-residue stretch at 151 to 239 (FLYVKVSMDG…SCRRLRIMKG (89 aa)) folds into the PB1 domain.

This sequence belongs to the Aux/IAA family. Homodimers and heterodimers. In terms of tissue distribution, highly expressed in etiolated seedlings and flowers. Expressed in roots and green seedlings.

It localises to the nucleus. Aux/IAA proteins are short-lived transcriptional factors that function as repressors of early auxin response genes at low auxin concentrations. This is Auxin-responsive protein IAA17 (IAA17) from Oryza sativa subsp. japonica (Rice).